A 139-amino-acid polypeptide reads, in one-letter code: Plastocyanin (139 aa).

Positions 1–34 (MKLIAQISRSLSLALFALVLMVGSFVAVMSPAAA) are cleaved as a signal peptide. Residues 35 to 139 (ETFTVKMGAD…GMVGKITVEG (105 aa)) form the Plastocyanin-like domain. Cu cation-binding residues include H73, C123, H126, and M131.

It belongs to the plastocyanin family. The cofactor is Cu(2+).

It localises to the cellular thylakoid membrane. Its function is as follows. Participates in electron transfer between P700 and the cytochrome b6-f complex in photosystem I. This is Plastocyanin (petE) from Leptolyngbya laminosa (Phormidium laminosum).